The primary structure comprises 331 residues: Ketol-acid reductoisomerase (NADP(+)) (331 aa).

A KARI N-terminal Rossmann domain is found at 2–182 (AKLFYDSDAD…GGTRAGILET (181 aa)). NADP(+) is bound by residues 25–28 (YGSQ), Ser-51, Ser-53, and 83–86 (DEFQ). Residue His-108 is part of the active site. Residue Gly-134 coordinates NADP(+). The KARI C-terminal knotted domain occupies 183-328 (NFKEETETDL…KTLRSMFSWL (146 aa)). Mg(2+)-binding residues include Asp-191, Glu-195, Glu-227, and Glu-231. Ser-252 contributes to the substrate binding site.

It belongs to the ketol-acid reductoisomerase family. It depends on Mg(2+) as a cofactor.

The catalysed reaction is (2R)-2,3-dihydroxy-3-methylbutanoate + NADP(+) = (2S)-2-acetolactate + NADPH + H(+). The enzyme catalyses (2R,3R)-2,3-dihydroxy-3-methylpentanoate + NADP(+) = (S)-2-ethyl-2-hydroxy-3-oxobutanoate + NADPH + H(+). Its pathway is amino-acid biosynthesis; L-isoleucine biosynthesis; L-isoleucine from 2-oxobutanoate: step 2/4. The protein operates within amino-acid biosynthesis; L-valine biosynthesis; L-valine from pyruvate: step 2/4. In terms of biological role, involved in the biosynthesis of branched-chain amino acids (BCAA). Catalyzes an alkyl-migration followed by a ketol-acid reduction of (S)-2-acetolactate (S2AL) to yield (R)-2,3-dihydroxy-isovalerate. In the isomerase reaction, S2AL is rearranged via a Mg-dependent methyl migration to produce 3-hydroxy-3-methyl-2-ketobutyrate (HMKB). In the reductase reaction, this 2-ketoacid undergoes a metal-dependent reduction by NADPH to yield (R)-2,3-dihydroxy-isovalerate. The polypeptide is Ketol-acid reductoisomerase (NADP(+)) (Prochlorococcus marinus (strain NATL1A)).